The chain runs to 237 residues: MSKFPDLPGMKNLDANPYEPELASFDDMDADAGDGDAVAKTGTTTIGITTDGGVVIATDMRASLGGRFVSNKSVQKVEQIHPSAALTLVGSVGGAQSFIRTLRSESDLYEVRRGEPMSISALATLAGNFARGGPFFAINPILGGVDEEGSHVYSIDPAGGVMEDDYTVTGSGMQVAHGKLEDRYHDDLSMEEAEELAVEAVYAATERDTGSGNGVYVATVTGDGVDITGYDDFEGAR.

The disordered stretch occupies residues 1-27 (MSKFPDLPGMKNLDANPYEPELASFDD). A propeptide spans 1-42 (MSKFPDLPGMKNLDANPYEPELASFDDMDADAGDGDAVAKTG) (removed in mature form; by autocatalysis). The active-site Nucleophile is Thr-43.

It belongs to the peptidase T1B family. As to quaternary structure, the 20S proteasome core is composed of 14 alpha and 14 beta subunits that assemble into four stacked heptameric rings, resulting in a barrel-shaped structure. The two inner rings, each composed of seven catalytic beta subunits, are sandwiched by two outer rings, each composed of seven alpha subunits. The catalytic chamber with the active sites is on the inside of the barrel. Has a gated structure, the ends of the cylinder being occluded by the N-termini of the alpha-subunits. Is capped at one or both ends by the proteasome regulatory ATPase, PAN.

It is found in the cytoplasm. The enzyme catalyses Cleavage of peptide bonds with very broad specificity.. With respect to regulation, the formation of the proteasomal ATPase PAN-20S proteasome complex, via the docking of the C-termini of PAN into the intersubunit pockets in the alpha-rings, triggers opening of the gate for substrate entry. Interconversion between the open-gate and close-gate conformations leads to a dynamic regulation of the 20S proteasome proteolysis activity. In terms of biological role, component of the proteasome core, a large protease complex with broad specificity involved in protein degradation. This chain is Proteasome subunit beta, found in Halomicrobium mukohataei (strain ATCC 700874 / DSM 12286 / JCM 9738 / NCIMB 13541) (Haloarcula mukohataei).